The following is a 677-amino-acid chain: Protein hook (677 aa).

A Calponin-homology (CH) domain is found at 6-123 (NEMYYSLLEW…RLLQLVLGCA (118 aa)). Coiled-coil stretches lie at residues 135–436 (EIMC…KCGH) and 478–588 (QTAL…AKEV).

This sequence belongs to the hook family. Homodimer. Interacts with microtubules via its N-terminus.

Its subcellular location is the cytoplasm. The protein localises to the cytoskeleton. The protein resides in the endosome. It is found in the synapse. In terms of biological role, involved in endocytic trafficking by stabilizing organelles of the endocytic pathway. Probably acts as a cytoskeletal linker protein required to tether endosome vesicles to the cytoskeleton. Involved in modulation of endocytosis at stages required for down-regulation of membrane proteins that control synapse size. Not involved in synaptic vesicle recycling. Required in R7 cells for boss endocytosis into multivesicular bodies (MVBs). Has a role in regulating adult longevity. In Drosophila persimilis (Fruit fly), this protein is Protein hook.